Reading from the N-terminus, the 1407-residue chain is Enhancer of mRNA-decapping protein 4 (1407 aa).

Ala-2 carries the post-translational modification N-acetylalanine. Phosphoserine is present on residues Ser-3 and Ser-6. Lys-125 bears the N6-acetyllysine mark. WD repeat units follow at residues 174 to 214 (GFTG…GKIQ), 230 to 277 (NHFR…SSHS), 295 to 334 (GHST…QDEP), and 342 to 393 (PHDG…CLQT). The segment at 547–566 (GESRPELGSEGLASAPHGSQ) is disordered. Ser-560, Ser-565, Ser-583, and Ser-585 each carry phosphoserine. Disordered regions lie at residues 604–632 (SLQQ…SSSS) and 673–745 (SSSS…STAL). Composition is skewed to low complexity over residues 609-632 (SASP…SSSS) and 673-693 (SSSS…LPGP). Ser-681, Ser-713, Ser-728, and Ser-730 each carry phosphoserine. Residues 727-745 (ASPSRTRSPDVISSASTAL) are compositionally biased toward polar residues. Position 732 is a phosphothreonine (Thr-732). 2 positions are modified to phosphoserine: Ser-734 and Ser-746. Residues 787–817 (PRPRQGPELSSQLGLDGGPGDGDRHSTPSLL) form a disordered region. Phosphothreonine is present on Thr-827. Ser-850 and Ser-877 each carry phosphoserine. A disordered region spans residues 875-951 (HDSQDTSAEQ…SRLTEHQVVE (77 aa)). Position 880 is a phosphothreonine (Thr-880). A phosphoserine mark is found at Ser-881, Ser-885, Ser-893, Ser-896, and Ser-898. Phosphothreonine is present on Thr-907. The stretch at 972-1031 (HNQEELLQRLCAQLEGLQSTVTDHVERALETRHEQEQRRLERALAEGQQRGGQLQEQLTQ) forms a coiled coil. Ser-1386 carries the phosphoserine modification.

The protein belongs to the WD repeat EDC4 family. Part of a decapping complex consisting of DCP1A, DCP2, EDC3, EDC4 and probably DDX6. Part of a complex consisting of DCP1A, EDC3, EDC4 and DDX6. Part of a complex consisting of DCP1B, EDC3, EDC4 and DDX6. Interacts with DCP2. Interacts with NBDY. Interacts with Tex19.1. Interacts with LSM14A. Interacts with DDX6.

Its subcellular location is the cytoplasm. The protein localises to the P-body. It localises to the nucleus. Functionally, in the process of mRNA degradation, seems to play a role in mRNA decapping. Component of a complex containing DCP2 and DCP1A which functions in decapping of ARE-containing mRNAs. Promotes complex formation between DCP1A and DCP2. Enhances the catalytic activity of DCP2 (in vitro). The protein is Enhancer of mRNA-decapping protein 4 (Edc4) of Rattus norvegicus (Rat).